The following is a 441-amino-acid chain: Glutamate--tRNA ligase 1 (441 aa).

Residues 8-18 (PSPTGYIHIGN) carry the 'HIGH' region motif. The 'KMSKS' region motif lies at 239-243 (ALSKR). Residue Lys242 participates in ATP binding.

The protein belongs to the class-I aminoacyl-tRNA synthetase family. Glutamate--tRNA ligase type 1 subfamily. As to quaternary structure, monomer.

The protein resides in the cytoplasm. The enzyme catalyses tRNA(Glu) + L-glutamate + ATP = L-glutamyl-tRNA(Glu) + AMP + diphosphate. Its function is as follows. Catalyzes the attachment of glutamate to tRNA(Glu) in a two-step reaction: glutamate is first activated by ATP to form Glu-AMP and then transferred to the acceptor end of tRNA(Glu). The protein is Glutamate--tRNA ligase 1 of Roseobacter denitrificans (strain ATCC 33942 / OCh 114) (Erythrobacter sp. (strain OCh 114)).